We begin with the raw amino-acid sequence, 276 residues long: 3-methyl-2-oxobutanoate hydroxymethyltransferase (276 aa).

Positions 44 and 83 each coordinate Mg(2+). Residues 44-45 (DS), Asp83, and Lys113 each bind 3-methyl-2-oxobutanoate. Mg(2+) is bound at residue Glu115. The active-site Proton acceptor is Glu182.

This sequence belongs to the PanB family. Homodecamer; pentamer of dimers. Requires Mg(2+) as cofactor.

It is found in the cytoplasm. It catalyses the reaction 3-methyl-2-oxobutanoate + (6R)-5,10-methylene-5,6,7,8-tetrahydrofolate + H2O = 2-dehydropantoate + (6S)-5,6,7,8-tetrahydrofolate. Its pathway is cofactor biosynthesis; (R)-pantothenate biosynthesis; (R)-pantoate from 3-methyl-2-oxobutanoate: step 1/2. In terms of biological role, catalyzes the reversible reaction in which hydroxymethyl group from 5,10-methylenetetrahydrofolate is transferred onto alpha-ketoisovalerate to form ketopantoate. The protein is 3-methyl-2-oxobutanoate hydroxymethyltransferase of Clostridium acetobutylicum (strain ATCC 824 / DSM 792 / JCM 1419 / IAM 19013 / LMG 5710 / NBRC 13948 / NRRL B-527 / VKM B-1787 / 2291 / W).